The chain runs to 162 residues: NADH-quinone oxidoreductase subunit I (162 aa).

2 consecutive 4Fe-4S ferredoxin-type domains span residues 52–82 (LRRY…IEAG) and 93–122 (TRYD…EGPN). [4Fe-4S] cluster-binding residues include Cys-62, Cys-65, Cys-68, Cys-72, Cys-102, Cys-105, Cys-108, and Cys-112.

This sequence belongs to the complex I 23 kDa subunit family. In terms of assembly, NDH-1 is composed of 14 different subunits. Subunits NuoA, H, J, K, L, M, N constitute the membrane sector of the complex. The cofactor is [4Fe-4S] cluster.

Its subcellular location is the cell inner membrane. The enzyme catalyses a quinone + NADH + 5 H(+)(in) = a quinol + NAD(+) + 4 H(+)(out). Functionally, NDH-1 shuttles electrons from NADH, via FMN and iron-sulfur (Fe-S) centers, to quinones in the respiratory chain. The immediate electron acceptor for the enzyme in this species is believed to be ubiquinone. Couples the redox reaction to proton translocation (for every two electrons transferred, four hydrogen ions are translocated across the cytoplasmic membrane), and thus conserves the redox energy in a proton gradient. This Beijerinckia indica subsp. indica (strain ATCC 9039 / DSM 1715 / NCIMB 8712) protein is NADH-quinone oxidoreductase subunit I.